A 331-amino-acid polypeptide reads, in one-letter code: MTNAVEDSGPRDLLFLLISTSRFNRYMPYYTMMAAVWATFIAGALKLQQDPESLSIEFILYKAGLCFVHCLLLCGAGNTWNDLVDRDIDARVARTKMRPLASGKVTLTEALLWMTGQYFLSVKMLDLILDGRNIWTLMLPLTASIMLYPYLKRPIFSKVFVYPQYILGLAIGYPAITGWASITGSEEPLGDIIKHCIPICLLVFFWCVYFNTAYSHQDSVDDRKMNINSAYVIAGQRIRLFLAFLSVLPLLTIPYIISTINSPWLWVSWMATWTVSIVMQIAQFDSQKLESGGRIHWDNFLLGLWTIVACMVEVGLQKVEFWKNVEGYIKL.

8 helical membrane passes run 27–47 (MPYY…ALKL), 56–76 (IEFI…LCGA), 127–147 (LILD…SIML), 159–179 (VFVY…ITGW), 190–210 (GDII…CVYF), 240–260 (LFLA…ISTI), 264–284 (WLWV…IAQF), and 295–315 (IHWD…VEVG).

The protein belongs to the UbiA prenyltransferase family. It depends on Mg(2+) as a cofactor.

It localises to the golgi apparatus membrane. It carries out the reaction 5,7-dihydroxy-4-methylphthalide + (2E,6E)-farnesyl diphosphate = 4-farnesyl-3,5-dihydroxy-6-methylphthalide + diphosphate. It participates in secondary metabolite biosynthesis; terpenoid biosynthesis. In terms of biological role, polyprenyl transferase; part of the gene cluster that mediates the biosynthesis of mycophenolic acid (MPA), the first isolated antibiotic natural product in the world obtained from a culture of Penicillium brevicompactum in 1893. MpaA' is a Golgi apparatus-associated enzyme that catalyzes the prenylation of 5,7-dihydroxy-4,6-dimethylphthalide (DHMP) to yield farnesyl-DHMP (FDHMP). The first step of the pathway is the synthesis of 5-methylorsellinic acid (5MOA) by the cytosolic polyketide synthase mpaC. 5MOA is then converted to the phthalide compound 5,7-dihydroxy-4,6-dimethylphthalide (DHMP) by the endoplasmic reticulum-bound cytochrome P450 monooxygenase mpaDE. MpaDE first catalyzes hydroxylation of 5-MOA to 4,6-dihydroxy-2-(hydroxymethyl)-3-methylbenzoic acid (DHMB). MpaDE then acts as a lactone synthase that catalyzes the ring closure to convert DHMB into DHMP. The next step is the prenylation of DHMP by the Golgi apparatus-associated prenyltransferase mpaA to yield farnesyl-DHMP (FDHMP). The ER-bound oxygenase mpaB then mediates the oxidative cleavage the C19-C20 double bond in FDHMP to yield FDHMP-3C via a mycophenolic aldehyde intermediate. The O-methyltransferase mpaG catalyzes the methylation of FDHMP-3C to yield MFDHMP-3C. After the cytosolic methylation of FDHMP-3C, MFDHMP-3C enters into peroxisomes probably via free diffusion due to its low molecular weight. Upon a peroxisomal CoA ligation reaction, catalyzed by a beta-oxidation component enzyme acyl-CoA ligase ACL891, MFDHMP-3C-CoA would then be restricted to peroxisomes for the following beta-oxidation pathway steps. The peroxisomal beta-oxidation machinery than converts MFDHMP-3C-CoA into MPA_CoA, via a beta-oxidation chain-shortening process. Finally mpaH acts as a peroxisomal acyl-CoA hydrolase with high substrate specificity toward MPA-CoA to release the final product MPA. The polypeptide is Polyprenyl transferase mpaA' (Penicillium brevicompactum).